Consider the following 1242-residue polypeptide: Membrane-associated phosphatidylinositol transfer protein 1 (1242 aa).

Residues Thr-59, Thr-282, and Thr-287 each carry the phosphothreonine modification. Residues Cys-259–Leu-330 form a disordered region. Residues Gly-272–Thr-282 are compositionally biased toward polar residues. A compositionally biased stretch (low complexity) spans Ala-299–Ser-319. Residues Ser-300, Ser-304, Ser-319, Ser-326, Ser-329, Ser-342, Ser-345, Ser-346, and Ser-373 each carry the phosphoserine modification. Residue Ser-382 is modified to Phosphoserine; by CDK1. The span at Ala-581–Ser-593 shows a compositional bias: low complexity. The tract at residues Ala-581 to Pro-678 is disordered. Ser-593, Ser-600, and Ser-621 each carry phosphoserine. Over residues Gly-643–Ser-656 the composition is skewed to polar residues. Residues Leu-684–Glu-878 enclose the DDHD domain. The residue at position 894 (Ser-894) is a Phosphoserine. Residues Arg-1207–Glu-1242 are disordered. Arg-1209 carries the post-translational modification Omega-N-methylarginine. Position 1235 is a phosphoserine (Ser-1235).

This sequence belongs to the PtdIns transfer protein family. PI transfer class IIA subfamily. In terms of assembly, interacts with PIK4CA and VAPB. Interacts with PTK2B via its C-terminus. Interacts with RHOA. Has higher affinity for the inactive, GDP-bound form of RHOA. The CDK1-phosphorylated form interacts with PLK1. Phosphorylated on multiple sites by CDK1 at the onset of mitosis. Phosphorylation facilitates dissociation from the Golgi complex and is required for interaction with PLK1. In terms of processing, phosphorylated on threonine residues upon treatment with oleic acid. Post-translationally, phosphorylated on tyrosine residues by PTK2B.

The protein resides in the cytoplasm. Its subcellular location is the golgi apparatus. It is found in the golgi stack membrane. The protein localises to the endoplasmic reticulum membrane. It localises to the lipid droplet. The protein resides in the cleavage furrow. Its subcellular location is the midbody. It carries out the reaction a 1,2-diacyl-sn-glycero-3-phospho-(1D-myo-inositol)(in) = a 1,2-diacyl-sn-glycero-3-phospho-(1D-myo-inositol)(out). In terms of biological role, catalyzes the transfer of phosphatidylinositol (PI) between membranes. Binds PI, phosphatidylcholine (PC) and phosphatidic acid (PA) with the binding affinity order of PI &gt; PA &gt; PC. Regulates RHOA activity, and plays a role in cytoskeleton remodeling. Necessary for normal completion of cytokinesis. Plays a role in maintaining normal diacylglycerol levels in the Golgi apparatus. Necessary for maintaining the normal structure of the endoplasmic reticulum and the Golgi apparatus. Required for protein export from the endoplasmic reticulum and the Golgi. Binds calcium ions. This chain is Membrane-associated phosphatidylinositol transfer protein 1 (Pitpnm1), found in Rattus norvegicus (Rat).